Here is a 369-residue protein sequence, read N- to C-terminus: Uroporphyrinogen decarboxylase (369 aa).

Residues arginine 39, alanine 41, arginine 43, arginine 52, aspartate 88, tyrosine 166, serine 221, and histidine 341 each coordinate coproporphyrinogen I. The coproporphyrinogen III site is built by arginine 39, alanine 41, and arginine 43. The coproporphyrinogen III site is built by aspartate 88, tyrosine 166, serine 221, and histidine 341.

Belongs to the uroporphyrinogen decarboxylase family. Homodimer.

The protein localises to the cytoplasm. It localises to the cytosol. The catalysed reaction is uroporphyrinogen III + 4 H(+) = coproporphyrinogen III + 4 CO2. It catalyses the reaction uroporphyrinogen I + 4 H(+) = coproporphyrinogen I + 4 CO2. The protein operates within porphyrin-containing compound metabolism; protoporphyrin-IX biosynthesis; coproporphyrinogen-III from 5-aminolevulinate: step 4/4. Catalyzes the sequential decarboxylation of the four acetate side chains of uroporphyrinogen to form coproporphyrinogen and participates in the fifth step in the heme biosynthetic pathway. Isomer I or isomer III of uroporphyrinogen may serve as substrate, but only coproporphyrinogen III can ultimately be converted to heme. In vitro also decarboxylates pentacarboxylate porphyrinogen I. The chain is Uroporphyrinogen decarboxylase from Danio rerio (Zebrafish).